The chain runs to 448 residues: tRNA modification GTPase MnmE (448 aa).

Positions 25, 82, and 121 each coordinate (6S)-5-formyl-5,6,7,8-tetrahydrofolate. The TrmE-type G domain maps to 217–372 (GLTTVIAGRP…LRQEIIRRAG (156 aa)). Residue Asn-227 coordinates K(+). GTP contacts are provided by residues 227–232 (NVGKSS), 246–252 (TEIPGTT), 271–274 (DTAG), and 353–355 (SAR). Ser-231 lines the Mg(2+) pocket. K(+) contacts are provided by Thr-246, Ile-248, and Thr-251. Thr-252 is a binding site for Mg(2+). Residue Lys-448 participates in (6S)-5-formyl-5,6,7,8-tetrahydrofolate binding.

The protein belongs to the TRAFAC class TrmE-Era-EngA-EngB-Septin-like GTPase superfamily. TrmE GTPase family. As to quaternary structure, homodimer. Heterotetramer of two MnmE and two MnmG subunits. K(+) is required as a cofactor.

It localises to the cytoplasm. Exhibits a very high intrinsic GTPase hydrolysis rate. Involved in the addition of a carboxymethylaminomethyl (cmnm) group at the wobble position (U34) of certain tRNAs, forming tRNA-cmnm(5)s(2)U34. In Methylococcus capsulatus (strain ATCC 33009 / NCIMB 11132 / Bath), this protein is tRNA modification GTPase MnmE.